We begin with the raw amino-acid sequence, 404 residues long: Cytoplasmic tRNA 2-thiolation protein 2 (404 aa).

The protein belongs to the CTU2/NCS2 family.

It is found in the cytoplasm. It participates in tRNA modification; 5-methoxycarbonylmethyl-2-thiouridine-tRNA biosynthesis. In terms of biological role, plays a central role in 2-thiolation of mcm(5)S(2)U at tRNA wobble positions of tRNA(Lys), tRNA(Glu) and tRNA(Gln). May act by forming a heterodimer with NCS6/CTU1 that ligates sulfur from thiocarboxylated URM1 onto the uridine of tRNAs at wobble position. The chain is Cytoplasmic tRNA 2-thiolation protein 2 from Drosophila erecta (Fruit fly).